Here is a 154-residue protein sequence, read N- to C-terminus: Small heat shock protein C2 (154 aa).

The 112-residue stretch at 43-154 folds into the sHSP domain; sequence STEKNLIPRT…GKTRKIEVKG (112 aa).

Belongs to the small heat shock protein (HSP20) family.

The protein is Small heat shock protein C2 (hspC2) of Rickettsia felis (strain ATCC VR-1525 / URRWXCal2) (Rickettsia azadi).